Reading from the N-terminus, the 422-residue chain is UDP-N-acetylglucosamine 1-carboxyvinyltransferase (422 aa).

Residue 22-23 coordinates phosphoenolpyruvate; sequence KN. Arg-95 provides a ligand contact to UDP-N-acetyl-alpha-D-glucosamine. Cys-119 (proton donor) is an active-site residue. The residue at position 119 (Cys-119) is a 2-(S-cysteinyl)pyruvic acid O-phosphothioketal. UDP-N-acetyl-alpha-D-glucosamine is bound by residues 124 to 128, Asp-309, and Val-331; that span reads RPIDQ.

The protein belongs to the EPSP synthase family. MurA subfamily.

It localises to the cytoplasm. It carries out the reaction phosphoenolpyruvate + UDP-N-acetyl-alpha-D-glucosamine = UDP-N-acetyl-3-O-(1-carboxyvinyl)-alpha-D-glucosamine + phosphate. Its pathway is cell wall biogenesis; peptidoglycan biosynthesis. Cell wall formation. Adds enolpyruvyl to UDP-N-acetylglucosamine. This Anaeromyxobacter sp. (strain K) protein is UDP-N-acetylglucosamine 1-carboxyvinyltransferase.